A 271-amino-acid polypeptide reads, in one-letter code: Aminoglycoside 3'-phosphotransferase (271 aa).

D198 acts as the Proton acceptor in catalysis.

It belongs to the aminoglycoside phosphotransferase family.

It catalyses the reaction kanamycin A + ATP = kanamycin 3'-phosphate + ADP + H(+). Resistance to kanamycin and structurally-related aminoglycosides, including amikacin. The chain is Aminoglycoside 3'-phosphotransferase (aphA) from Escherichia coli.